Here is a 309-residue protein sequence, read N- to C-terminus: Porphobilinogen deaminase (309 aa).

Position 241 is an S-(dipyrrolylmethanemethyl)cysteine (Cys-241).

Belongs to the HMBS family. In terms of assembly, monomer. Dipyrromethane is required as a cofactor.

It carries out the reaction 4 porphobilinogen + H2O = hydroxymethylbilane + 4 NH4(+). The protein operates within porphyrin-containing compound metabolism; protoporphyrin-IX biosynthesis; coproporphyrinogen-III from 5-aminolevulinate: step 2/4. In terms of biological role, tetrapolymerization of the monopyrrole PBG into the hydroxymethylbilane pre-uroporphyrinogen in several discrete steps. The sequence is that of Porphobilinogen deaminase from Bacillus mycoides (strain KBAB4) (Bacillus weihenstephanensis).